We begin with the raw amino-acid sequence, 182 residues long: Pyruvoyl-dependent arginine decarboxylase (182 aa).

At Ser44 the chain carries Pyruvic acid (Ser).

The protein belongs to the PdaD family. The cofactor is pyruvate.

The catalysed reaction is L-arginine + H(+) = agmatine + CO2. This is Pyruvoyl-dependent arginine decarboxylase from Thermoplasma volcanium (strain ATCC 51530 / DSM 4299 / JCM 9571 / NBRC 15438 / GSS1).